The sequence spans 254 residues: 30 kDa major early protein (254 aa).

This chain is 30 kDa major early protein, found in Human cytomegalovirus (strain Eisenhardt) (HHV-5).